Reading from the N-terminus, the 117-residue chain is Large ribosomal subunit protein uL18 (117 aa).

The protein belongs to the universal ribosomal protein uL18 family. As to quaternary structure, part of the 50S ribosomal subunit; part of the 5S rRNA/L5/L18/L25 subcomplex. Contacts the 5S and 23S rRNAs.

Its function is as follows. This is one of the proteins that bind and probably mediate the attachment of the 5S RNA into the large ribosomal subunit, where it forms part of the central protuberance. This is Large ribosomal subunit protein uL18 from Vibrio vulnificus (strain CMCP6).